The chain runs to 104 residues: Protein EPIDERMAL PATTERNING FACTOR 1 (104 aa).

The first 20 residues, 1 to 20 (MKSLLLLAFFLSFFFGSLLA), serve as a signal peptide directing secretion. Cystine bridges form between Cys60-Cys94, Cys64-Cys70, Cys67-Cys96, and Cys79-Cys88. An N-linked (GlcNAc...) asparagine glycan is attached at Asn98.

The protein belongs to the plant cysteine rich small secretory peptide family. Epidermal patterning factor subfamily. Interacts with ERECTA and ERL1, but not with TMM. Expressed in shoots, but not in roots. Mostly localized in developing leaves, specifically in meristemoids, guard mother cells (GMCs), and young guard cells.

It localises to the secreted. Its function is as follows. Controls stomatal patterning. Regulates asymmetric cell division during guard cell differentiation. Mediates stomatal development inhibition. Not cleaved by the protease CRSP (AC Q9LNU1). MEPF1: mobile signal controlling stomatal development in a non-cell-autonomous manner. Uses ERL1 as major receptor. May act by competing with somatogen (AC Q9SV72) for the same receptor, TMM (AC Q9SSD1). The polypeptide is Protein EPIDERMAL PATTERNING FACTOR 1 (Arabidopsis thaliana (Mouse-ear cress)).